The following is a 166-amino-acid chain: Large ribosomal subunit protein uL11 (166 aa).

It belongs to the universal ribosomal protein uL11 family.

This chain is Large ribosomal subunit protein uL11 (rpl12), found in Dictyostelium discoideum (Social amoeba).